The following is a 138-amino-acid chain: Putative nickel-responsive regulator (138 aa).

Residues His-80, His-91, His-93, and Cys-99 each contribute to the Ni(2+) site.

Belongs to the transcriptional regulatory CopG/NikR family. It depends on Ni(2+) as a cofactor.

Its function is as follows. Transcriptional regulator. In Campylobacter hominis (strain ATCC BAA-381 / DSM 21671 / CCUG 45161 / LMG 19568 / NCTC 13146 / CH001A), this protein is Putative nickel-responsive regulator.